Consider the following 234-residue polypeptide: Dienlactone hydrolase 2 (234 aa).

Catalysis depends on residues cysteine 143, aspartate 167, and histidine 199.

This sequence belongs to the dienelactone hydrolase family.

Its pathway is xenobiotic degradation. Functionally, dienlactone hydrolase; part of the Fusarium detoxification of benzoxazolinone cluster 2 (FDB2) involved in the degradation of benzoxazolinones produced by the host plant. Maize, wheat, and rye produce the 2 benzoxazinone phytoanticipins 2,4-dihy-droxy-7-methoxy-1,4-benzoxazin-3-one (DIMBOA) and 2,4-dihydroxy-1,4-benzoxazin-3-one (DIBOA) that, due to their inherent instability once released, spontaneously degrade to the more stable corresponding benzoxazolinones, 6-methoxy-2-benzoxazolinone (MBOA) and 2-benzoxazolinone (BOA), respectively. The first step in the detoxification of benzoxazolinones involves the hydrolysis of the cyclic ester bond of benzoxazolinones by the FDB1 cluster gamma-lactamase MBL1 to aminophenols. MBL1 is able to convert BOA into 2-aminophenol (2-AP), as well as MBOA into 5-methoxy-2-aminophenol (2-AMP). The FDB2 cluster N-malonyltransferase FDB2/NAT1 then metabolizes aminophenols via N-malonylation to non-toxic malonamic acids. FDB2/NAT1 converts 2-AP into N-(2-hydroxyphenyl) malonamic acid (HPMA) and 2-AMP into N-(2-hydroxy-4-methoxyphenyl) malonamic acid (HMPMA). The duplicated dienlactone hydrolases DLH1 and DLH2 may provide redundant function for hydrolyzing the lactone moiety in the BOA molecule. The roles of the amidases and other enzymes encoded by the 2 FDB clusters have not been identified so far. This is Dienlactone hydrolase 2 from Gibberella moniliformis (strain M3125 / FGSC 7600) (Maize ear and stalk rot fungus).